Reading from the N-terminus, the 174-residue chain is Larval cuticle protein A1A (174 aa).

Repeat copies occupy residues 45–48 (AAPV) and 67–70 (AAPV). Residues 84-150 (NPQYSFGYDV…AVVHREPLVA (67 aa)) enclose the Chitin-binding type R&amp;R domain. Residues 155–158 (AAPA) form repeat 3.

Its function is as follows. Component of the cuticle of the larva of Tenebrio molitor. This Tenebrio molitor (Yellow mealworm beetle) protein is Larval cuticle protein A1A.